The following is a 77-amino-acid chain: Large ribosomal subunit protein bL28 (77 aa).

The segment at 1–25 (MARVCQVTGKAPMSGNNVSHANNKT) is disordered.

It belongs to the bacterial ribosomal protein bL28 family.

The polypeptide is Large ribosomal subunit protein bL28 (Paraburkholderia phymatum (strain DSM 17167 / CIP 108236 / LMG 21445 / STM815) (Burkholderia phymatum)).